We begin with the raw amino-acid sequence, 117 residues long: Large ribosomal subunit protein uL22 (117 aa).

This sequence belongs to the universal ribosomal protein uL22 family. As to quaternary structure, part of the 50S ribosomal subunit.

In terms of biological role, this protein binds specifically to 23S rRNA; its binding is stimulated by other ribosomal proteins, e.g. L4, L17, and L20. It is important during the early stages of 50S assembly. It makes multiple contacts with different domains of the 23S rRNA in the assembled 50S subunit and ribosome. Functionally, the globular domain of the protein is located near the polypeptide exit tunnel on the outside of the subunit, while an extended beta-hairpin is found that lines the wall of the exit tunnel in the center of the 70S ribosome. The polypeptide is Large ribosomal subunit protein uL22 (Staphylococcus epidermidis (strain ATCC 35984 / DSM 28319 / BCRC 17069 / CCUG 31568 / BM 3577 / RP62A)).